Here is a 493-residue protein sequence, read N- to C-terminus: Proline--tRNA ligase (493 aa).

Belongs to the class-II aminoacyl-tRNA synthetase family. ProS type 3 subfamily. As to quaternary structure, homodimer.

The protein resides in the cytoplasm. It carries out the reaction tRNA(Pro) + L-proline + ATP = L-prolyl-tRNA(Pro) + AMP + diphosphate. Its function is as follows. Catalyzes the attachment of proline to tRNA(Pro) in a two-step reaction: proline is first activated by ATP to form Pro-AMP and then transferred to the acceptor end of tRNA(Pro). This chain is Proline--tRNA ligase, found in Parabacteroides distasonis (strain ATCC 8503 / DSM 20701 / CIP 104284 / JCM 5825 / NCTC 11152).